We begin with the raw amino-acid sequence, 369 residues long: Cyclic AMP receptor-like protein A (369 aa).

The Extracellular portion of the chain corresponds to 1–4; sequence MIQI. The chain crosses the membrane as a helical span at residues 5 to 22; sequence LLSTFISFIIIIVSSNDI. Over 23-72 the chain is Cytoplasmic; it reads RSGENDNFNNNKMINNFLTTITTNDTIIIKETESPNDYDFSKEQIESLDK. Residues 73–93 form a helical membrane-spanning segment; sequence IVYFSSTMGIVGALFIIVSFF. The Extracellular portion of the chain corresponds to 94-100; sequence LFKAART. A helical transmembrane segment spans residues 101–121; the sequence is FATKMIFFLSLSDLFAAIFYL. Residues 122–146 are Cytoplasmic-facing; sequence PYYRDSDIMCNLQGMGLVFFLSSSY. A helical transmembrane segment spans residues 147–167; it reads LWTMCISISLFMVFFTTIFEL. Residues 168 to 173 lie on the Extracellular side of the membrane; that stretch reads NHWFKY. A helical transmembrane segment spans residues 174 to 194; sequence FHFICWGIPLFTAIISLIFHA. Residues 195–212 are Cytoplasmic-facing; the sequence is YGKTGSWCFISDPTSIFR. Residues 213–233 form a helical membrane-spanning segment; that stretch reads LLYYLPLIVVFFINLVVFIAI. The Extracellular portion of the chain corresponds to 234–247; that stretch reads RWKISQHSNSLVSR. The helical transmembrane segment at 248 to 268 threads the bilayer; the sequence is VNIIVSFYLIAFSLSQLPTII. At 269–369 the chain is on the cytoplasmic side; that stretch reads NSIQNFSDPD…KLIIDDYNRV (101 aa).

Belongs to the G-protein coupled receptor 5 family.

The protein localises to the membrane. Its function is as follows. Receptor for cAMP which may play a role in prestalk cell differentiation. May act as a negative regulator of cell growth. This is Cyclic AMP receptor-like protein A (crlA) from Dictyostelium discoideum (Social amoeba).